Consider the following 290-residue polypeptide: Bifunctional protein FolD (290 aa).

NADP(+) contacts are provided by residues 166–168 (GAS) and Ile232.

The protein belongs to the tetrahydrofolate dehydrogenase/cyclohydrolase family. Homodimer.

The enzyme catalyses (6R)-5,10-methylene-5,6,7,8-tetrahydrofolate + NADP(+) = (6R)-5,10-methenyltetrahydrofolate + NADPH. The catalysed reaction is (6R)-5,10-methenyltetrahydrofolate + H2O = (6R)-10-formyltetrahydrofolate + H(+). Its pathway is one-carbon metabolism; tetrahydrofolate interconversion. Its function is as follows. Catalyzes the oxidation of 5,10-methylenetetrahydrofolate to 5,10-methenyltetrahydrofolate and then the hydrolysis of 5,10-methenyltetrahydrofolate to 10-formyltetrahydrofolate. The polypeptide is Bifunctional protein FolD (Proteus mirabilis (strain HI4320)).